We begin with the raw amino-acid sequence, 372 residues long: Glutamate 5-kinase (372 aa).

Lys9 provides a ligand contact to ATP. Positions 49, 136, and 148 each coordinate substrate. Residues 168-169 (TD) and 210-216 (TGGMKSK) each bind ATP. Residues 276-353 (AGSIEIDSGA…EEALSLTKRS (78 aa)) form the PUA domain.

This sequence belongs to the glutamate 5-kinase family.

It is found in the cytoplasm. The enzyme catalyses L-glutamate + ATP = L-glutamyl 5-phosphate + ADP. Its pathway is amino-acid biosynthesis; L-proline biosynthesis; L-glutamate 5-semialdehyde from L-glutamate: step 1/2. Catalyzes the transfer of a phosphate group to glutamate to form L-glutamate 5-phosphate. This Shouchella clausii (strain KSM-K16) (Alkalihalobacillus clausii) protein is Glutamate 5-kinase.